Here is a 126-residue protein sequence, read N- to C-terminus: Histone H2B type 1-N (126 aa).

Positions 1–12 are enriched in low complexity; that stretch reads MPEPSKSAPAPK. The interval 1-36 is disordered; the sequence is MPEPSKSAPAPKKGSKKAVTKAQKKDGKKRKRSRKE. Pro-2 is subject to N-acetylproline. Position 3 is an ADP-ribosyl glutamic acid (Glu-3). Lys-6 is subject to N6-(2-hydroxyisobutyryl)lysine; alternate. Lys-6 carries the post-translational modification N6-(beta-hydroxybutyryl)lysine; alternate. N6-acetyllysine; alternate is present on Lys-6. Residue Lys-6 is modified to N6-butyryllysine; alternate. At Lys-6 the chain carries N6-crotonyllysine; alternate. Lys-6 carries the N6-lactoyllysine; alternate modification. A Glycyl lysine isopeptide (Lys-Gly) (interchain with G-Cter in SUMO2); alternate cross-link involves residue Lys-6. Ser-7 carries the ADP-ribosylserine modification. Lys-12 carries the N6-(beta-hydroxybutyryl)lysine; alternate modification. 2 positions are modified to N6-acetyllysine; alternate: Lys-12 and Lys-13. N6-crotonyllysine; alternate occurs at positions 12 and 13. Lys-12 carries the N6-lactoyllysine; alternate modification. Lys-13 is modified (N6-(2-hydroxyisobutyryl)lysine; alternate). Ser-15 carries the post-translational modification Phosphoserine; by STK4/MST1. N6-acetyllysine; alternate occurs at positions 16, 17, 21, and 24. An N6-crotonyllysine; alternate mark is found at Lys-16, Lys-17, Lys-21, and Lys-24. Residues Lys-16, Lys-17, Lys-21, and Lys-24 each carry the N6-lactoyllysine; alternate modification. Lys-17 and Lys-21 each carry N6-(beta-hydroxybutyryl)lysine; alternate. Lys-17 carries the post-translational modification N6-glutaryllysine; alternate. Lys-21 and Lys-24 each carry N6-(2-hydroxyisobutyryl)lysine; alternate. N6-butyryllysine; alternate is present on Lys-21. Residue Lys-21 forms a Glycyl lysine isopeptide (Lys-Gly) (interchain with G-Cter in SUMO2); alternate linkage. An N6-(2-hydroxyisobutyryl)lysine modification is found at Lys-25. Residue Lys-35 is modified to N6-(2-hydroxyisobutyryl)lysine; alternate. The residue at position 35 (Lys-35) is an N6-(beta-hydroxybutyryl)lysine; alternate. At Lys-35 the chain carries N6-crotonyllysine; alternate. At Lys-35 the chain carries N6-glutaryllysine; alternate. Residue Lys-35 is modified to N6-succinyllysine; alternate. Lys-35 is covalently cross-linked (Glycyl lysine isopeptide (Lys-Gly) (interchain with G-Cter in ubiquitin); alternate). The residue at position 36 (Glu-36) is a PolyADP-ribosyl glutamic acid. Ser-37 bears the Phosphoserine; by AMPK mark. Residues Lys-44, Lys-47, and Lys-58 each carry the N6-(2-hydroxyisobutyryl)lysine; alternate modification. Position 44 is an N6-lactoyllysine; alternate (Lys-44). An N6-glutaryllysine; alternate mark is found at Lys-44 and Lys-47. Lys-47 is subject to N6-methyllysine; alternate. N6,N6-dimethyllysine; alternate is present on Lys-58. Arg-80 bears the Dimethylated arginine mark. N6-(2-hydroxyisobutyryl)lysine; alternate is present on Lys-86. The residue at position 86 (Lys-86) is an N6-(beta-hydroxybutyryl)lysine; alternate. Position 86 is an N6-acetyllysine; alternate (Lys-86). An N6-lactoyllysine; alternate modification is found at Lys-86. Lys-86 carries the post-translational modification N6,N6,N6-trimethyllysine; alternate. Omega-N-methylarginine occurs at positions 87 and 93. Lys-109 carries the post-translational modification N6-(2-hydroxyisobutyryl)lysine; alternate. The residue at position 109 (Lys-109) is an N6-lactoyllysine; alternate. Lys-109 is subject to N6-glutaryllysine; alternate. Lys-109 carries the post-translational modification N6-methyllysine; alternate. Residue Ser-113 is glycosylated (O-linked (GlcNAc) serine). A Phosphothreonine modification is found at Thr-116. N6-(2-hydroxyisobutyryl)lysine; alternate occurs at positions 117 and 121. N6-(beta-hydroxybutyryl)lysine; alternate occurs at positions 117 and 121. N6-lactoyllysine; alternate occurs at positions 117 and 121. Lys-117 and Lys-121 each carry N6-glutaryllysine; alternate. N6-succinyllysine; alternate is present on residues Lys-117 and Lys-121. Lys-117 carries the post-translational modification N6-malonyllysine; alternate. Lys-117 is modified (N6-methylated lysine; alternate). A Glycyl lysine isopeptide (Lys-Gly) (interchain with G-Cter in ubiquitin); alternate cross-link involves residue Lys-121.

This sequence belongs to the histone H2B family. In terms of assembly, the nucleosome is a histone octamer containing two molecules each of H2A, H2B, H3 and H4 assembled in one H3-H4 heterotetramer and two H2A-H2B heterodimers. The octamer wraps approximately 147 bp of DNA. Post-translationally, monoubiquitination at Lys-35 (H2BK34Ub) by the MSL1/MSL2 dimer is required for histone H3 'Lys-4' (H3K4me) and 'Lys-79' (H3K79me) methylation and transcription activation at specific gene loci, such as HOXA9 and MEIS1 loci. Similarly, monoubiquitination at Lys-121 (H2BK120Ub) by the RNF20/40 complex gives a specific tag for epigenetic transcriptional activation and is also prerequisite for histone H3 'Lys-4' and 'Lys-79' methylation. It also functions cooperatively with the FACT dimer to stimulate elongation by RNA polymerase II. H2BK120Ub also acts as a regulator of mRNA splicing: deubiquitination by USP49 is required for efficient cotranscriptional splicing of a large set of exons. Phosphorylation at Ser-37 (H2BS36ph) by AMPK in response to stress promotes transcription. Phosphorylated on Ser-15 (H2BS14ph) by STK4/MST1 during apoptosis; which facilitates apoptotic chromatin condensation. Also phosphorylated on Ser-15 in response to DNA double strand breaks (DSBs), and in correlation with somatic hypermutation and immunoglobulin class-switch recombination. In terms of processing, glcNAcylation at Ser-113 promotes monoubiquitination of Lys-121. It fluctuates in response to extracellular glucose, and associates with transcribed genes. Post-translationally, ADP-ribosylated by PARP1 or PARP2 on Ser-7 (H2BS6ADPr) in response to DNA damage. H2BS6ADPr promotes recruitment of CHD1L. Mono-ADP-ribosylated on Glu-3 (H2BE2ADPr) by PARP3 in response to single-strand breaks. Poly ADP-ribosylation on Glu-36 (H2BE35ADPr) by PARP1 regulates adipogenesis: it inhibits phosphorylation at Ser-37 (H2BS36ph), thereby blocking expression of pro-adipogenetic genes. Crotonylation (Kcr) is specifically present in male germ cells and marks testis-specific genes in post-meiotic cells, including X-linked genes that escape sex chromosome inactivation in haploid cells. Crotonylation marks active promoters and enhancers and confers resistance to transcriptional repressors. It is also associated with post-meiotically activated genes on autosomes. In terms of processing, lactylated in macrophages by EP300/P300 by using lactoyl-CoA directly derived from endogenous or exogenous lactate, leading to stimulates gene transcription.

It localises to the nucleus. The protein resides in the chromosome. In terms of biological role, core component of nucleosome. Nucleosomes wrap and compact DNA into chromatin, limiting DNA accessibility to the cellular machineries which require DNA as a template. Histones thereby play a central role in transcription regulation, DNA repair, DNA replication and chromosomal stability. DNA accessibility is regulated via a complex set of post-translational modifications of histones, also called histone code, and nucleosome remodeling. The chain is Histone H2B type 1-N from Homo sapiens (Human).